The sequence spans 310 residues: Cytochrome P450 monooxygenase ppzG (310 aa).

Heme is bound at residue Cys-288.

This sequence belongs to the cytochrome P450 family. It depends on heme as a cofactor.

It functions in the pathway secondary metabolite biosynthesis. Cytochrome P450 monooxygenase; part of the gene cluster that mediates the biosynthesis of pyrrolopyrazines, secondary metabolites showing insecticidal activity. The role of ppzG within the pathway has still to be determined. The single multifunctional NRPS ppzA is sufficient to produce peramine via condensation of 1-pyrroline-5-carboxylate and arginine, N-methylation of the alpha-amino group of arginine and reduction of the thioester and the cyclization to form an iminium ion resulting in release from the peptide synthetase. Deprotonation of this intermediate and oxidation of the pyrroline ring would give rise to peramine. In Epichloe species that produce only peramine, the peramine synthetase gene is not localized in a gene cluster, in contrast to Metarhizium species that contain additional pyrrolopyrazine biosynthesis genes. The 2-oxoglutarate-Fe(II) type oxidoreductase ppzC hydroxylates peramine to yield the newly identified compound 8-hydroxyperamine whereas ppzD converts L-proline into trans-4-hydroxy-L-proline, a precursor of peramine biosynthesis. The polypeptide is Cytochrome P450 monooxygenase ppzG (ppzG) (Metarhizium majus (strain ARSEF 297)).